A 657-amino-acid polypeptide reads, in one-letter code: Conserved oligomeric Golgi complex subunit 6 (657 aa).

It belongs to the COG6 family. Component of the conserved oligomeric Golgi complex which is composed of eight different subunits and is required for normal Golgi morphology and localization.

The protein resides in the golgi apparatus membrane. Its function is as follows. Required for normal Golgi function. This chain is Conserved oligomeric Golgi complex subunit 6 (COG6), found in Homo sapiens (Human).